The chain runs to 244 residues: Mediator of RNA polymerase II transcription subunit 19 (244 aa).

Disordered regions lie at residues 1 to 67 (MENF…PFYL) and 171 to 244 (PKKK…SSLR). The segment covering 26–38 (GKPPPPPPPPPGG) has biased composition (pro residues). Residues 44–55 (PPSTATSAPAGA) show a composition bias toward low complexity. Residues 171-182 (PKKKNKHKHKQS) are compositionally biased toward basic residues. Serine 194 is subject to Phosphoserine. Over residues 212–224 (KRKKKEKKKKKNR) the composition is skewed to basic residues. Serine 226 carries the post-translational modification Phosphoserine. Low complexity predominate over residues 234-244 (SSQASSSSSLR).

It belongs to the Mediator complex subunit 19 family. As to quaternary structure, component of the Mediator complex, which is composed of MED1, MED4, MED6, MED7, MED8, MED9, MED10, MED11, MED12, MED13, MED13L, MED14, MED15, MED16, MED17, MED18, MED19, MED20, MED21, MED22, MED23, MED24, MED25, MED26, MED27, MED29, MED30, MED31, CCNC, CDK8 and CDC2L6/CDK11. The MED12, MED13, CCNC and CDK8 subunits form a distinct module termed the CDK8 module. Mediator containing the CDK8 module is less active than Mediator lacking this module in supporting transcriptional activation. Individual preparations of the Mediator complex lacking one or more distinct subunits have been variously termed ARC, CRSP, DRIP, PC2, SMCC and TRAP.

The protein resides in the nucleus. In terms of biological role, component of the Mediator complex, a coactivator involved in the regulated transcription of nearly all RNA polymerase II-dependent genes. Mediator functions as a bridge to convey information from gene-specific regulatory proteins to the basal RNA polymerase II transcription machinery. Mediator is recruited to promoters by direct interactions with regulatory proteins and serves as a scaffold for the assembly of a functional preinitiation complex with RNA polymerase II and the general transcription factors. This is Mediator of RNA polymerase II transcription subunit 19 (Med19) from Mus musculus (Mouse).